The chain runs to 78 residues: Large ribosomal subunit protein bL28 (78 aa).

The disordered stretch occupies residues 1–21 (MSRVCQVTGKRPMSGNNRSHA).

This sequence belongs to the bacterial ribosomal protein bL28 family.

In Photorhabdus laumondii subsp. laumondii (strain DSM 15139 / CIP 105565 / TT01) (Photorhabdus luminescens subsp. laumondii), this protein is Large ribosomal subunit protein bL28.